Reading from the N-terminus, the 125-residue chain is Cystatin-like cysteine protease inhibitor EPIC2A (125 aa).

The first 21 residues, 1–21 (MSFLRPTLALLAVTALVTTSA), serve as a signal peptide directing secretion. N-linked (GlcNAc...) asparagine glycosylation is present at asparagine 45. The short motif at 68–72 (QVVSG) is the Secondary area of contact element.

It belongs to the cystatin family.

The protein resides in the secreted. In terms of biological role, secreted effector that interacts with and inhibits host apoplastic pathogenesis-related papain-like cysteine proteases. Inhibition of host proteases by a pathogen extracellular protease inhibitor forms a specific type of defense-counterdefense mechanism between plants and microbial pathogens. This is Cystatin-like cysteine protease inhibitor EPIC2A from Phytophthora infestans (strain T30-4) (Potato late blight agent).